A 532-amino-acid chain; its full sequence is Glucose-6-phosphate isomerase (532 aa).

The Proton donor role is filled by Glu330. Catalysis depends on residues His359 and Lys461.

This sequence belongs to the GPI family.

It is found in the cytoplasm. It carries out the reaction alpha-D-glucose 6-phosphate = beta-D-fructose 6-phosphate. It participates in carbohydrate biosynthesis; gluconeogenesis. It functions in the pathway carbohydrate degradation; glycolysis; D-glyceraldehyde 3-phosphate and glycerone phosphate from D-glucose: step 2/4. Catalyzes the reversible isomerization of glucose-6-phosphate to fructose-6-phosphate. This Synechococcus sp. (strain CC9902) protein is Glucose-6-phosphate isomerase.